The primary structure comprises 165 residues: MKMVGRAWKFGDDISTDHITPGRYYHLRSNMPELAKHVMEDADPDFMKKFRPGDFIVAGKNFGMGSSREHAPLALKIAGVSAVIAKSFARIFYRNAINVGLPVLIADTDSIDSGDELEVDLGKGLVVNRTKGIEIRVKPIPEVMLKILHEGGLVSYVKKHGDIKI.

It belongs to the LeuD family. LeuD type 2 subfamily. Heterodimer of LeuC and LeuD.

The catalysed reaction is (2R,3S)-3-isopropylmalate = (2S)-2-isopropylmalate. Its pathway is amino-acid biosynthesis; L-leucine biosynthesis; L-leucine from 3-methyl-2-oxobutanoate: step 2/4. Its function is as follows. Catalyzes the isomerization between 2-isopropylmalate and 3-isopropylmalate, via the formation of 2-isopropylmaleate. The chain is 3-isopropylmalate dehydratase small subunit 2 (leuD2) from Archaeoglobus fulgidus (strain ATCC 49558 / DSM 4304 / JCM 9628 / NBRC 100126 / VC-16).